A 120-amino-acid chain; its full sequence is Large ribosomal subunit protein uL18 (120 aa).

The protein belongs to the universal ribosomal protein uL18 family. Part of the 50S ribosomal subunit; part of the 5S rRNA/L5/L18/L25 subcomplex. Contacts the 5S and 23S rRNAs.

Functionally, this is one of the proteins that bind and probably mediate the attachment of the 5S RNA into the large ribosomal subunit, where it forms part of the central protuberance. This chain is Large ribosomal subunit protein uL18, found in Methylorubrum populi (strain ATCC BAA-705 / NCIMB 13946 / BJ001) (Methylobacterium populi).